Here is a 246-residue protein sequence, read N- to C-terminus: Putative protein phosphatase 2C-type (246 aa).

A PPM-type phosphatase domain is found at 2-240 (KISLKTDIGQ…DNITIALVHN (239 aa)). Residues Asp36, Gly37, Asp192, and Asp231 each contribute to the Mn(2+) site.

Mg(2+) serves as cofactor. The cofactor is Mn(2+).

It carries out the reaction O-phospho-L-seryl-[protein] + H2O = L-seryl-[protein] + phosphate. The enzyme catalyses O-phospho-L-threonyl-[protein] + H2O = L-threonyl-[protein] + phosphate. The polypeptide is Putative protein phosphatase 2C-type (Streptococcus pyogenes serotype M6 (strain ATCC BAA-946 / MGAS10394)).